The sequence spans 265 residues: Homeobox protein CDX-1 (265 aa).

Residues 9-153 form a disordered region; the sequence is KDSPVYPGPA…GGGGSGKTRT (145 aa). A compositionally biased stretch (pro residues) spans 30–42; the sequence is YGPPAPPPAPPQY. Residues 73–92 show a composition bias toward low complexity; it reads AAAYGPGPAAPAASPASLAF. A compositionally biased stretch (pro residues) spans 93-108; that stretch reads GPPPDFSPVPAPPGPG. The span at 110–126 shows a compositional bias: low complexity; it reads GLLAQPLGGPGTPSSPG. The homeobox DNA-binding region spans 154–213; it reads KDKYRVVYTDHQRLELEKEFHYSRYITIRRKSELAANLGLTERQVKIWFQNRRAKERKVN. An interaction with DNA region spans residues 157-178; the sequence is YRVVYTDHQRLELEKEFHYSRY. Residues 196–207 form an interaction with 5-mCpG DNA region; the sequence is RQVKIWFQNRRA. A compositionally biased stretch (basic residues) spans 207 to 217; that stretch reads AKERKVNKKKQ. The tract at residues 207–265 is disordered; it reads AKERKVNKKKQQQQQPPQPPMAHDITATPAGPSLGGLCPSNTSLLATSSPMPVKEEFLP. Positions 245 to 256 are enriched in polar residues; the sequence is PSNTSLLATSSP.

Belongs to the Caudal homeobox family. Intestinal epithelium.

Its subcellular location is the nucleus. Functionally, plays a role in transcriptional regulation. Involved in activated KRAS-mediated transcriptional activation of PRKD1 in colorectal cancer (CRC) cells. Binds to the PRKD1 promoter in colorectal cancer (CRC) cells. Could play a role in the terminal differentiation of the intestine. Binds preferentially to methylated DNA. This Homo sapiens (Human) protein is Homeobox protein CDX-1 (CDX1).